The chain runs to 506 residues: Ubiquitin carboxyl-terminal hydrolase 22 (506 aa).

The segment at 4 to 121 adopts a UBP-type zinc-finger fold; sequence AGCSHVNGFK…KEEQRKAWKL (118 aa). Zn(2+) is bound by residues cysteine 6, histidine 8, cysteine 46, cysteine 49, cysteine 59, cysteine 62, cysteine 67, histidine 72, histidine 76, histidine 82, cysteine 95, and cysteine 98. One can recognise a USP domain in the interval 159-501; the sequence is RGLINLGNTC…EGYLLFYHKQ (343 aa). Cysteine 168 (nucleophile) is an active-site residue. Histidine 460 functions as the Proton acceptor in the catalytic mechanism.

This sequence belongs to the peptidase C19 family. UBP8 subfamily. In terms of assembly, component of some SAGA transcription coactivator-HAT complexes.

It is found in the nucleus. It carries out the reaction Thiol-dependent hydrolysis of ester, thioester, amide, peptide and isopeptide bonds formed by the C-terminal Gly of ubiquitin (a 76-residue protein attached to proteins as an intracellular targeting signal).. Functionally, histone deubiquitinating component of the transcription regulatory histone acetylation (HAT) complex SAGA. Catalyzes the deubiquitination of both histones H2A and H2B, thereby acting as a coactivator. Recruited to specific gene promoters by activators, where it is required for transcription. The protein is Ubiquitin carboxyl-terminal hydrolase 22 (usp22) of Danio rerio (Zebrafish).